The sequence spans 110 residues: Protein RALF-like 19 (110 aa).

The signal sequence occupies residues 1 to 23 (MGIKILLILGLLTLAVVAESANA). A propeptide spans 24–58 (TWTLTKSCVNGQGCIGEDGELDYLMDSETNRRQLA) (removed in mature form). Intrachain disulfides connect cysteine 76/cysteine 86 and cysteine 99/cysteine 105.

This sequence belongs to the plant rapid alkalinization factor (RALF) family. Post-translationally, proteolytically cleaved, probably by S1P, a subtilisin-like serine protease (subtilase).

It localises to the secreted. Functionally, cell signaling peptide that may regulate plant stress, growth, and development. Mediates a rapid alkalinization of extracellular space by mediating a transient increase in the cytoplasmic Ca(2+) concentration leading to a calcium-dependent signaling events through a cell surface receptor and a concomitant activation of some intracellular mitogen-activated protein kinases. The sequence is that of Protein RALF-like 19 (RALFL19) from Arabidopsis thaliana (Mouse-ear cress).